Consider the following 493-residue polypeptide: Probable cytosol aminopeptidase (493 aa).

Residues K260 and D265 each contribute to the Mn(2+) site. Residue K272 is part of the active site. Residues D284, D343, and E345 each contribute to the Mn(2+) site. Residue R347 is part of the active site.

Belongs to the peptidase M17 family. Mn(2+) is required as a cofactor.

The protein resides in the cytoplasm. The catalysed reaction is Release of an N-terminal amino acid, Xaa-|-Yaa-, in which Xaa is preferably Leu, but may be other amino acids including Pro although not Arg or Lys, and Yaa may be Pro. Amino acid amides and methyl esters are also readily hydrolyzed, but rates on arylamides are exceedingly low.. It catalyses the reaction Release of an N-terminal amino acid, preferentially leucine, but not glutamic or aspartic acids.. Functionally, presumably involved in the processing and regular turnover of intracellular proteins. Catalyzes the removal of unsubstituted N-terminal amino acids from various peptides. This chain is Probable cytosol aminopeptidase, found in Nostoc punctiforme (strain ATCC 29133 / PCC 73102).